A 469-amino-acid polypeptide reads, in one-letter code: Glutamate-1-semialdehyde 2,1-aminomutase, chloroplastic (469 aa).

A chloroplast-targeting transit peptide spans 1 to 34; it reads MAGAAAAVASGISIRPVAAPKISRAPRSRSVVRA. Lys-309 carries the post-translational modification N6-(pyridoxal phosphate)lysine.

The protein belongs to the class-III pyridoxal-phosphate-dependent aminotransferase family. HemL subfamily. Homodimer. Pyridoxal 5'-phosphate serves as cofactor.

The protein localises to the plastid. It localises to the chloroplast. The catalysed reaction is (S)-4-amino-5-oxopentanoate = 5-aminolevulinate. Its pathway is porphyrin-containing compound metabolism; protoporphyrin-IX biosynthesis; 5-aminolevulinate from L-glutamyl-tRNA(Glu): step 2/2. It participates in porphyrin-containing compound metabolism; chlorophyll biosynthesis. The sequence is that of Glutamate-1-semialdehyde 2,1-aminomutase, chloroplastic (GSA) from Hordeum vulgare (Barley).